The following is a 493-amino-acid chain: Lysine--tRNA ligase (493 aa).

Mg(2+)-binding residues include Glu-402 and Glu-409.

Belongs to the class-II aminoacyl-tRNA synthetase family. As to quaternary structure, homodimer. Mg(2+) is required as a cofactor.

The protein localises to the cytoplasm. The catalysed reaction is tRNA(Lys) + L-lysine + ATP = L-lysyl-tRNA(Lys) + AMP + diphosphate. This chain is Lysine--tRNA ligase, found in Ureaplasma urealyticum serovar 10 (strain ATCC 33699 / Western).